The sequence spans 841 residues: Rho guanine nucleotide exchange factor 15 (841 aa).

Disordered regions lie at residues 1–179 (MSAQ…QARA), 239–261 (RRAS…HPAV), and 279–333 (KPPK…REEE). A compositionally biased stretch (polar residues) spans 39–53 (NGSSPQELPRNSNDA). Residues 65-110 (PPAASLKPPALLPPSASRASLDSQTSPDSPSSTPTPSPVSRRSASP) are compositionally biased toward low complexity. A phosphoserine mark is found at Ser-107 and Ser-109. The span at 111 to 124 (EPAPRSPVPPPKPS) shows a compositional bias: pro residues. Tyr-353 carries the post-translational modification Phosphotyrosine; by EPHB2. A DH domain is found at 417–601 (RMQESLFEVV…SKIIERCSAE (185 aa)). Positions 765-793 (ESSAPAKTEGRSLESRAAPKHLHKTPEGW) are disordered.

In terms of assembly, interacts with EPHB2. Interacts with EPHA4. Phosphorylated on tyrosine residues upon EFNA1 stimulation. EPHB2-dependent phosphorylation at Tyr-353 triggers UBE3A-mediated ubiquitination. Post-translationally, ubiquitinated; UBE3A-mediated ubiquitination and degradation by the proteasome promotes EFNB1-dependent synapse formation. In terms of tissue distribution, expressed in the vascular smooth muscle of coronary artery.

It localises to the cell projection. Its subcellular location is the dendrite. Specific GEF for RhoA activation. Does not activate RAC1 or CDC42. Regulates vascular smooth muscle contractility. Negatively regulates excitatory synapse development by suppressing the synapse-promoting activity of EPHB2. This chain is Rho guanine nucleotide exchange factor 15 (ARHGEF15), found in Homo sapiens (Human).